The sequence spans 559 residues: Nuclear envelope integral membrane protein (559 aa).

An N-terminal signal peptide occupies residues 1 to 15 (MRLLTLALLVAGSLA). 3 N-linked (GlcNAc...) asparagine glycosylation sites follow: asparagine 67, asparagine 81, and asparagine 114. 5 helical membrane-spanning segments follow: residues 164–184 (YTSGCSFGLLASLLLVAFIVW), 192–212 (IGVPILIGGWSVSLYMLHFAW), 218–238 (IMIEYQKYVIGYFATVLLISM), 267–287 (LIYFSVQMVEVSTGTIGALII), and 290–310 (ICRGFLFAGIRWYFVGLKAVW). N-linked (GlcNAc...) asparagine glycans are attached at residues asparagine 408 and asparagine 465. Disordered stretches follow at residues 475 to 494 (RRDSTPRHGNFQSEHRPRMP) and 510 to 559 (KNGR…DADE). Positions 517 to 526 (PSSSTASGMT) are enriched in polar residues. Residues 530–539 (YMRKARRIDA) show a composition bias toward basic and acidic residues.

The protein belongs to the NEMP family.

Its subcellular location is the nucleus inner membrane. Contributes to nuclear envelope stiffness in germ cells. Required for fertility. The protein is Nuclear envelope integral membrane protein of Caenorhabditis elegans.